A 68-amino-acid polypeptide reads, in one-letter code: Conotoxin Lt5.11 (68 aa).

Residues M1–P19 form the signal peptide. Residues K20–A54 constitute a propeptide that is removed on maturation.

Belongs to the conotoxin T superfamily. Post-translationally, contains 2 disulfide bonds that can be either 'C1-C3, C2-C4' or 'C1-C4, C2-C3', since these disulfide connectivities have been observed for conotoxins with cysteine framework V (for examples, see AC P0DQQ7 and AC P81755). As to expression, expressed by the venom duct.

The protein localises to the secreted. This chain is Conotoxin Lt5.11, found in Conus litteratus (Lettered cone).